The primary structure comprises 377 residues: Nitric oxide reductase FlRd-NAD(+) reductase (377 aa).

Belongs to the FAD-dependent oxidoreductase family. It depends on FAD as a cofactor.

It is found in the cytoplasm. It carries out the reaction 2 reduced [nitric oxide reductase rubredoxin domain] + NAD(+) + H(+) = 2 oxidized [nitric oxide reductase rubredoxin domain] + NADH. The protein operates within nitrogen metabolism; nitric oxide reduction. Its function is as follows. One of at least two accessory proteins for anaerobic nitric oxide (NO) reductase. Reduces the rubredoxin moiety of NO reductase. The sequence is that of Nitric oxide reductase FlRd-NAD(+) reductase from Salmonella paratyphi A (strain AKU_12601).